The sequence spans 162 residues: Caveolin-2 (162 aa).

Residues 1 to 86 (MGLETEKADA…FEVSKYLIYK (86 aa)) are Cytoplasmic-facing. Tyr19 carries the phosphotyrosine; by SRC modification. A disordered region spans residues 19–40 (YSRHSGLGYPEPEKCAKSTQDR). Phosphoserine is present on residues Ser20 and Ser23. Phosphotyrosine; by SRC is present on Tyr27. The span at 29 to 40 (EPEKCAKSTQDR) shows a compositional bias: basic and acidic residues. Ser36 is subject to Phosphoserine. Residues 87–107 (VLTVLLAIPLAFVAGILFATL) constitute an intramembrane region (helical). Over 108–162 (SCLHIWIVVPFVKTCLMVLPSVQTVWHSITDGFIAPLYKSMGLIFSSISLRLSPE) the chain is Cytoplasmic.

Belongs to the caveolin family. As to quaternary structure, monomer or homodimer. Interacts with CAV1; the interaction forms a stable heterooligomeric complex that is required for targeting to lipid rafts and for caveolae formation. Tyrosine phosphorylated forms do not form heterooligomers with the Tyr-19-phosphorylated form existing as a monomer or dimer, and the Tyr-27-form as a monomer only. Interacts (tyrosine phosphorylated form) with the SH2 domain-containing proteins, RASA1, NCK1 and SRC. Interacts (tyrosine phosphorylated form) with INSR, the interaction (Tyr-27-phosphorylated form) is increased on insulin stimulation. Interacts (Tyr-19 phosphorylated form) with MAPK1 (phosphorylated form); the interaction, promoted by insulin, leads to nuclear location and MAPK1 activation. Interacts with STAT3; the interaction is increased on insulin-induced tyrosine phosphorylation leading to STAT activation. Phosphorylated on serine and tyrosine residues. CAV1 promotes phosphorylation on Ser-23 which then targets the complex to the plasma membrane, lipid rafts and caveolae. Phosphorylation on Ser-36 appears to modulate mitosis in endothelial cells. Phosphorylation on both Tyr-19 and Tyr-27 is required for insulin-induced 'Ser-727' phosphorylation of STAT3 and its activation. Phosphorylation on Tyr-19 is required for insulin-induced phosphorylation of MAPK1 and DNA binding of STAT3. Tyrosine phosphorylation is induced by both EGF and insulin (By. similarity).

The protein resides in the nucleus. It is found in the cytoplasm. It localises to the golgi apparatus membrane. The protein localises to the cell membrane. Its subcellular location is the membrane. The protein resides in the caveola. Its function is as follows. May act as a scaffolding protein within caveolar membranes. Interacts directly with G-protein alpha subunits and can functionally regulate their activity. Acts as an accessory protein in conjunction with CAV1 in targeting to lipid rafts and driving caveolae formation. The Ser-36 phosphorylated form has a role in modulating mitosis in endothelial cells. Positive regulator of cellular mitogenesis of the MAPK signaling pathway. Required for the insulin-stimulated nuclear translocation and activation of MAPK1 and STAT3, and the subsequent regulation of cell cycle progression. This Didelphis virginiana (North American opossum) protein is Caveolin-2 (CAV2).